A 51-amino-acid chain; its full sequence is Micropeptide inhibiting actin cytoskeleton (51 aa).

Residues 1-22 form a disordered region; the sequence is MERAGVPGFSPRRSSVEAKMQS.

In terms of assembly, interacts with aquaporin AQP2.

Its function is as follows. Reduces filamentous actin fibers by interacting with aquaporin AQP2 which leads to inhibition of the expression of SEPTIN4 and integrin ITGB4. Also inhibits the activation of the EREG/EGFR signaling pathway through interaction with AQP2. This is Micropeptide inhibiting actin cytoskeleton from Homo sapiens (Human).